Reading from the N-terminus, the 595-residue chain is NADH-quinone oxidoreductase subunit C/D (595 aa).

The segment at 1–185 (MNKNICLSAS…NPFVLTKEKE (185 aa)) is NADH dehydrogenase I subunit C. Positions 209–595 (DFMFLNFGPN…IDFVMSDVDR (387 aa)) are NADH dehydrogenase I subunit D.

This sequence in the N-terminal section; belongs to the complex I 30 kDa subunit family. In the C-terminal section; belongs to the complex I 49 kDa subunit family. In terms of assembly, NDH-1 is composed of 13 different subunits. Subunits NuoB, CD, E, F, and G constitute the peripheral sector of the complex.

It is found in the cell inner membrane. The enzyme catalyses a quinone + NADH + 5 H(+)(in) = a quinol + NAD(+) + 4 H(+)(out). In terms of biological role, NDH-1 shuttles electrons from NADH, via FMN and iron-sulfur (Fe-S) centers, to quinones in the respiratory chain. The immediate electron acceptor for the enzyme in this species is believed to be ubiquinone. Couples the redox reaction to proton translocation (for every two electrons transferred, four hydrogen ions are translocated across the cytoplasmic membrane), and thus conserves the redox energy in a proton gradient. This is NADH-quinone oxidoreductase subunit C/D from Baumannia cicadellinicola subsp. Homalodisca coagulata.